Consider the following 549-residue polypeptide: Alpha-amylase (549 aa).

The first 34 residues, 1–34 (MLTFHRIIRKGWMFLLAFLLTALLFCPTGQPAKA), serve as a signal peptide directing secretion. Ca(2+) contacts are provided by D139, D196, A218, D220, D231, and D237. Na(+) is bound at residue D196. Residues D220, D231, D237, and L238 each contribute to the Na(+) site. A Ca(2+)-binding site is contributed by D239. D268 functions as the Nucleophile in the catalytic mechanism. H272 provides a ligand contact to Ca(2+). The active-site Proton donor is the E298. Ca(2+)-binding residues include G337, F339, S440, D441, and D464.

Belongs to the glycosyl hydrolase 13 family. In terms of assembly, monomer. Ca(2+) is required as a cofactor. Na(+) serves as cofactor.

The protein localises to the secreted. It carries out the reaction Endohydrolysis of (1-&gt;4)-alpha-D-glucosidic linkages in polysaccharides containing three or more (1-&gt;4)-alpha-linked D-glucose units.. The polypeptide is Alpha-amylase (amyS) (Geobacillus stearothermophilus (Bacillus stearothermophilus)).